The primary structure comprises 122 residues: UPF0145 protein Bmul_3577/BMULJ_04940 (122 aa).

This sequence belongs to the UPF0145 family.

The polypeptide is UPF0145 protein Bmul_3577/BMULJ_04940 (Burkholderia multivorans (strain ATCC 17616 / 249)).